The sequence spans 91 residues: Large ribosomal subunit protein bL27 (91 aa).

Residues 1–10 show a composition bias toward gly residues; the sequence is MAQKKGGGST. The segment at 1–20 is disordered; the sequence is MAQKKGGGSTRNGRDSQPKM.

Belongs to the bacterial ribosomal protein bL27 family.

The polypeptide is Large ribosomal subunit protein bL27 (Verminephrobacter eiseniae (strain EF01-2)).